The chain runs to 227 residues: NADH-quinone oxidoreductase subunit C (227 aa).

This sequence belongs to the complex I 30 kDa subunit family. In terms of assembly, NDH-1 is composed of 14 different subunits. Subunits NuoB, C, D, E, F, and G constitute the peripheral sector of the complex.

It localises to the cell inner membrane. It carries out the reaction a quinone + NADH + 5 H(+)(in) = a quinol + NAD(+) + 4 H(+)(out). In terms of biological role, NDH-1 shuttles electrons from NADH, via FMN and iron-sulfur (Fe-S) centers, to quinones in the respiratory chain. The immediate electron acceptor for the enzyme in this species is believed to be ubiquinone. Couples the redox reaction to proton translocation (for every two electrons transferred, four hydrogen ions are translocated across the cytoplasmic membrane), and thus conserves the redox energy in a proton gradient. The protein is NADH-quinone oxidoreductase subunit C of Coxiella burnetii (strain RSA 331 / Henzerling II).